A 221-amino-acid polypeptide reads, in one-letter code: Transmembrane emp24 domain-containing protein 3 (221 aa).

The signal sequence occupies residues 1–25 (MVHEAPHASSFQMLLQLLLLLLLRA). At 28–184 (LRSAELTFEL…RAEDLNSRVS (157 aa)) the chain is on the lumenal side. The GOLD domain maps to 42–124 (KQCFHEEVEQ…HKTVYFDFQV (83 aa)). Arg103 carries the dimethylated arginine modification. The chain crosses the membrane as a helical span at residues 185–205 (YWSVGETIALFVVSFSQVLLL). Residues 206 to 221 (KSFFTEKRPVNRAVHS) are Cytoplasmic-facing. The short motif at 208 to 209 (FF) is the COPII vesicle coat-binding element. The COPI vesicle coat-binding motif lies at 208-221 (FFTEKRPVNRAVHS).

It belongs to the EMP24/GP25L family. As to quaternary structure, monomer in endoplasmic reticulum, endoplasmic reticulum-Golgi intermediate compartment and cis-Golgi network. Interacts (via C-terminus) with COPG1; the interaction involves dimeric TMED3; however, there are conflicting reports on the interaction. Interacts with GORASP1 and GORASP2.

It is found in the endoplasmic reticulum-Golgi intermediate compartment membrane. It localises to the golgi apparatus. The protein resides in the cis-Golgi network membrane. The protein localises to the golgi stack membrane. Its subcellular location is the endoplasmic reticulum membrane. It is found in the cytoplasmic vesicle. It localises to the COPI-coated vesicle membrane. Its function is as follows. Potential role in vesicular protein trafficking, mainly in the early secretory pathway. Contributes to the coupled localization of TMED2 and TMED10 in the cis-Golgi network. In Mus musculus (Mouse), this protein is Transmembrane emp24 domain-containing protein 3 (Tmed3).